A 764-amino-acid chain; its full sequence is Transient receptor potential cation channel subfamily V member 2 (764 aa).

Residues 1 to 46 (MTSPSSSPVFRLETLDGGQEDGSEADRGKLDFGSGLPPMESQFQGE) are disordered. The segment at 1 to 388 (MTSPSSSPVF…LLQAKWDLLI (388 aa)) is required for interaction with SLC50A1. Topologically, residues 1–390 (MTSPSSSPVF…QAKWDLLIPK (390 aa)) are cytoplasmic. Serine 6 carries the phosphoserine modification. ANK repeat units follow at residues 72–114 (NRFD…TEGS), 115–161 (TGKT…DDYY), 162–207 (RGHS…TCFY), 208–243 (FGEL…ATDS), 244–292 (QGNT…IRNL), and 293–319 (QDLT…REFS). A helical membrane pass occupies residues 391–411 (FFLNFLCNLIYMFIFTAVAYH). The Extracellular portion of the chain corresponds to 412-434 (QPTLKKQAAPHLKAEVGNSMLLT). Residues 435–455 (GHILILLGGIYLLVGQLWYFW) form a helical membrane-spanning segment. Topologically, residues 456–471 (RRHVFIWISFIDSYFE) are cytoplasmic. Residues 472 to 492 (ILFLFQALLTVVSQVLCFLAI) traverse the membrane as a helical segment. Position 493 (glutamate 493) is a topological domain, extracellular. The chain crosses the membrane as a helical span at residues 494–514 (WYLPLLVSALVLGWLNLLYYT). The Cytoplasmic portion of the chain corresponds to 515-537 (RGFQHTGIYSVMIQKVILRDLLR). Residues 538-558 (FLLIYLVFLFGFAVALVSLSQ) traverse the membrane as a helical segment. Residues 562–585 (RPEAPTGPNATESVQPMEGQEDEG) are disordered. Asparagine 570 carries N-linked (GlcNAc...) asparagine glycosylation. An intramembrane region (pore-forming) is located at residues 572–609 (TESVQPMEGQEDEGNGAQYRGILEASLELFKFTIGMGE). The chain crosses the membrane as a helical span at residues 622 to 642 (VLLLLLAYVLLTYILLLNMLI). The Cytoplasmic segment spans residues 643 to 764 (ALMSETVNSV…YVPVQLLQSN (122 aa)). Residues 725–756 (PSGAGVPRTLENPVLASPPKEDEDGASEENYV) form a disordered region. 2 positions are modified to phosphoserine: serine 751 and serine 763.

It belongs to the transient receptor (TC 1.A.4) family. TrpV subfamily. TRPV2 sub-subfamily. As to quaternary structure, homotetramer. Interacts with a cAMP-dependent protein kinase type II regulatory subunit (PRKAR2A or PRKAR2B) and ACBD3. Interacts with SLC50A1; the interaction probably occurs intracellularly and depends on TRPV2 N-glycosylation. In terms of processing, N-glycosylated. Phosphorylated by PKA.

The protein resides in the cell membrane. The protein localises to the cytoplasm. Its subcellular location is the melanosome. The enzyme catalyses Ca(2+)(in) = Ca(2+)(out). The catalysed reaction is Mg(2+)(in) = Mg(2+)(out). It carries out the reaction Na(+)(in) = Na(+)(out). It catalyses the reaction K(+)(in) = K(+)(out). Calcium-permeable, non-selective cation channel with an outward rectification. Seems to be regulated, at least in part, by IGF1, PDGF and neuropeptide head activator. May transduce physical stimuli in mast cells. Activated by temperatures higher than 52 degrees Celsius; is not activated by vanilloids and acidic pH. This chain is Transient receptor potential cation channel subfamily V member 2 (TRPV2), found in Homo sapiens (Human).